The primary structure comprises 152 residues: Large ribosomal subunit protein uL13 (152 aa).

The disordered stretch occupies residues 133 to 152; that stretch reads EHPHQAQKPQPLTINTIPGA. Over residues 139–152 the composition is skewed to polar residues; that stretch reads QKPQPLTINTIPGA.

Belongs to the universal ribosomal protein uL13 family. Part of the 50S ribosomal subunit.

Its function is as follows. This protein is one of the early assembly proteins of the 50S ribosomal subunit, although it is not seen to bind rRNA by itself. It is important during the early stages of 50S assembly. In Thermosynechococcus vestitus (strain NIES-2133 / IAM M-273 / BP-1), this protein is Large ribosomal subunit protein uL13.